The following is an 80-amino-acid chain: Sulfur carrier protein TusA (80 aa).

The Cysteine persulfide intermediate role is filled by Cys-17.

The protein belongs to the sulfur carrier protein TusA family.

Its subcellular location is the cytoplasm. In terms of biological role, sulfur carrier protein which probably makes part of a sulfur-relay system. The chain is Sulfur carrier protein TusA from Pseudomonas putida (strain GB-1).